Consider the following 1073-residue polypeptide: MDGAKSGKQCHVCQICGDGVGTAADGELFTACDVCGFPVCRPCYEYERKDGSQACPQCKTKYKRHKGSPPILGDESDDVDADDASDVNYPTSGNQDHKHKIAERMLTWRMNSGRNDDIVHSKYDSGEIGHPKYDSGEIPRIYIPSLTHSQISGEIPGASPDHMMSPVGNIGRRGHPFPYVNHSPNPSREFSGSLGNVAWKERVDGWKMKDKGAIPMANGTSIAPSEGRGVGDIDASTDYNMEDALLNDETRQPLSRKVPISSSRINPYRMVIVLRLIVLCIFLHYRITNPVRNAYPLWLLSVICEIWFALSWILDQFPKWSPINRETYLDRLALRYDREGEPSQLAPVDIFVSTVDPMKEPPLVTANTVLSILAVDYPVDKVSCYVSDDGAAMLTFDALAETSEFARKWVPFCKKYSIEPRAPEWYFAQKIDYLKDKVQASFVKDRRAMKREYEEFKVRVNALVAKAQKVPEEGWIMQDGTPWPGNNTRDHPGMIQVFLGHSGGLDTEGNELPRLVYVSREKRPGFQHHKKAGAMNALVRVSAVLTNGQYLLNLDCDHYINNSKALREAMCFLMDPNLGRRVCYVQFPQRFDGIDRNDRYANRNTVFFDINLRGLDGLQGPVYVGTGCVFNRTALYGYEPPIKQKRPGYFSSLCGGRKKTKKSKEKSTEKKKSHKHVDSSVPVFNLEDIEEGIEGSGFDDEKSLLMSQMSLEKRFGQSSVFVASTLMEYGGVPQSATPESLLKEAIHVISCGYEDKSDWGTEIGWIYGSVTEDILTGFKMHARGWRSIYCMPKRPAFKGSAPINLSDRLNQVLRWALGSVEILFSRHCPIWYGYGGRLKFLERFAYINTTIYPLTSIPLLLYCILPAICLLTGKFIIPEISNFASIWFISLFLSIFATGILEMRWSGVGIDEWWRNEQFWVIGGISAHLFAVFQGLLKVLAGIDTSFTVTSKASDEEGDFAELYMFKWTTLLIPPTTILIINLVGVVAGISYAINSGYQSWGPLFGKLFFAFWVIVHLYPFLKGLMGRQNRTPTIVVVWAILLASIFSLLWVRIDPFTTRVTGPDTQKCGINC.

Residues 1–270 are Cytoplasmic-facing; that stretch reads MDGAKSGKQC…SSSRINPYRM (270 aa). Zn(2+)-binding residues include C13, C16, C32, C35, C40, C43, C55, and C58. The RING-type; degenerate zinc-finger motif lies at 13 to 59; the sequence is CQICGDGVGTAADGELFTACDVCGFPVCRPCYEYERKDGSQACPQCK. Residues 66-98 are disordered; the sequence is KGSPPILGDESDDVDADDASDVNYPTSGNQDHK. The span at 74–85 shows a compositional bias: acidic residues; sequence DESDDVDADDAS. A helical transmembrane segment spans residues 271-291; sequence VIVLRLIVLCIFLHYRITNPV. The Extracellular portion of the chain corresponds to 292–293; sequence RN. Residues 294–314 form a helical membrane-spanning segment; it reads AYPLWLLSVICEIWFALSWIL. The Cytoplasmic segment spans residues 315–856; that stretch reads DQFPKWSPIN…INTTIYPLTS (542 aa). UDP-alpha-D-glucose-binding residues include S353, K359, E360, and D389. Residue D389 is part of the active site. Positions 443 to 470 form a coiled coil; it reads VKDRRAMKREYEEFKVRVNALVAKAQKV. K530 lines the UDP-alpha-D-glucose pocket. Residues K531 and D555 each coordinate Mn(2+). Residues 655–676 are disordered; that stretch reads GGRKKTKKSKEKSTEKKKSHKH. Residue D773 is part of the active site. Residues 857-877 form a helical membrane-spanning segment; that stretch reads IPLLLYCILPAICLLTGKFII. Residues 878-882 are Extracellular-facing; the sequence is PEISN. The chain crosses the membrane as a helical span at residues 883-903; it reads FASIWFISLFLSIFATGILEM. Residues 904–918 lie on the Cytoplasmic side of the membrane; the sequence is RWSGVGIDEWWRNEQ. A helical membrane pass occupies residues 919–939; the sequence is FWVIGGISAHLFAVFQGLLKV. At 940 to 969 the chain is on the extracellular side; the sequence is LAGIDTSFTVTSKASDEEGDFAELYMFKWT. A helical transmembrane segment spans residues 970–990; that stretch reads TLLIPPTTILIINLVGVVAGI. Over 991–1001 the chain is Cytoplasmic; it reads SYAINSGYQSW. Residues 1002-1022 form a helical membrane-spanning segment; it reads GPLFGKLFFAFWVIVHLYPFL. Residues 1023–1031 are Extracellular-facing; it reads KGLMGRQNR. A helical membrane pass occupies residues 1032–1052; it reads TPTIVVVWAILLASIFSLLWV. Topologically, residues 1053–1073 are cytoplasmic; the sequence is RIDPFTTRVTGPDTQKCGINC.

It belongs to the glycosyltransferase 2 family. Plant cellulose synthase subfamily. Mn(2+) is required as a cofactor. The cofactor is Zn(2+).

The protein localises to the cell membrane. The enzyme catalyses [(1-&gt;4)-beta-D-glucosyl](n) + UDP-alpha-D-glucose = [(1-&gt;4)-beta-D-glucosyl](n+1) + UDP + H(+). It functions in the pathway glycan metabolism; plant cellulose biosynthesis. In terms of biological role, probable catalytic subunit of cellulose synthase terminal complexes ('rosettes'), required for beta-1,4-glucan microfibril crystallization, a major mechanism of the cell wall formation. This Oryza sativa subsp. japonica (Rice) protein is Probable cellulose synthase A catalytic subunit 2 [UDP-forming] (CESA2).